The chain runs to 226 residues: Clarin-3 (226 aa).

Residues 8–28 (LMFLSGFLTSLGSVVVICSIL) form a helical membrane-spanning segment. N-linked (GlcNAc...) asparagine glycosylation occurs at asparagine 46. 3 helical membrane-spanning segments follow: residues 92–112 (VVILLLILSLAASVLSSVFTF), 128–148 (GVYTWNGLSASFVFLAMVLFV), and 181–201 (FWLTLHVIFLNIVTAVIIIFY).

Belongs to the clarin family.

Its subcellular location is the membrane. This Mus musculus (Mouse) protein is Clarin-3 (Clrn3).